The sequence spans 832 residues: SID1 transmembrane family member 2 (832 aa).

Positions 1–15 (MIAWRLPLCVLLVAA) are cleaved as a signal peptide. The Extracellular segment spans residues 16 to 293 (VESHLGALGP…VSQAVTSEAY (278 aa)). N-linked (GlcNAc...) asparagine glycans are attached at residues Asn27, Asn54, Asn60, Asn123, Asn141, and Asn165. Residues 294–314 (VGGMLFCLGIFLSFYLLTVLL) traverse the membrane as a helical segment. Residues 315–447 (ACWENWRQRK…DKRVLRKKYQ (133 aa)) are Cytoplasmic-facing. Residues Ser401, Ser403, and Ser404 each carry the phosphoserine modification. Residues 448-468 (IYFWNIATIAVFYALPVVQLV) form a helical membrane-spanning segment. At 469 to 499 (ITYQTVVNVTGNQDICYYNFLCAHPLGNLSA) the chain is on the extracellular side. Residues Asn476 and Asn496 are each glycosylated (N-linked (GlcNAc...) asparagine). A helical membrane pass occupies residues 500-520 (FNNILSNLGYILLGLLFLLII). At 521 to 546 (LQREINHNRALLRNDLYALECGIPKH) the chain is on the cytoplasmic side. A helical membrane pass occupies residues 547-567 (FGLFYAMGTALMMEGLLSACY). The Extracellular segment spans residues 568-605 (HVCPNYTNFQFDTSFMYMIAGLCMLKLYQKRHPDINAS). Residues Asn572 and Asn603 are each glycosylated (N-linked (GlcNAc...) asparagine). The helical transmembrane segment at 606-626 (AYSAYACLAIVIFFSVLGVVF) threads the bilayer. Residues 627 to 631 (GKGNT) lie on the Cytoplasmic side of the membrane. A helical transmembrane segment spans residues 632-652 (AFWIVFSVIHIISTLLLSTQL). Residues 653–688 (YYMGRWKLDSGIFRRILHVLYTDCIRQCSGPLYTDR) lie on the Extracellular side of the membrane. Residues 689–709 (MVLLVMGNIINWSLAAYGLIM) traverse the membrane as a helical segment. Over 710-715 (RPNDFA) the chain is Cytoplasmic. A helical transmembrane segment spans residues 716–736 (SYLLAIGICNLLLYFAFYIIM). Topologically, residues 737-746 (KLRSGERIKL) are extracellular. A helical transmembrane segment spans residues 747 to 767 (IPLLCIVCTSVVWGFALFFFF). Residues 768–796 (QGLSTWQKTPAESREHNRDCILLDFFDDH) are Cytoplasmic-facing. Residues 797-817 (DIWHFLSSIAMFGSFLVLLTL) form a helical membrane-spanning segment. The Extracellular segment spans residues 818–832 (DDDLDTVQRDKIYVF).

Belongs to the SID1 family. As to quaternary structure, interacts with adapter protein complex 1 (AP-1) and AP-2, but not AP-3 and AP-4. Interacts with LAMP2. Glycosylated. In terms of tissue distribution, highly expressed in the liver, brain, kidney and intestine (at protein level).

The protein resides in the lysosome membrane. Its subcellular location is the cell membrane. In terms of biological role, mediates the translocation of RNA and DNA across the lysosomal membrane during RNA and DNA autophagy (RDA), a process in which RNA or DNA is directly imported into lysosomes in an ATP-dependent manner, and degraded. Involved in the uptake of single-stranded oligonucleotides by living cells, a process called gymnosis. In vitro, mediates the uptake of linear DNA more efficiently than that of circular DNA, but exhibits similar uptake efficacy toward RNA and DNA. Binds long double-stranded RNA (dsRNA) (500 - 700 base pairs), but not dsRNA shorter than 100 bp. The chain is SID1 transmembrane family member 2 (Sidt2) from Rattus norvegicus (Rat).